The primary structure comprises 105 residues: MDIKKGDLVLVISGKDKGKRGRVISVLPSEEKVVVEGVNIVKKHTRPTAKMRQGGIIEKPAPLYRCKVMLICPHCNQPTRVKHTFLEDGRKVRVCSKCKEIIDRV.

Belongs to the universal ribosomal protein uL24 family. Part of the 50S ribosomal subunit.

In terms of biological role, one of two assembly initiator proteins, it binds directly to the 5'-end of the 23S rRNA, where it nucleates assembly of the 50S subunit. Functionally, one of the proteins that surrounds the polypeptide exit tunnel on the outside of the subunit. The sequence is that of Large ribosomal subunit protein uL24 from Dictyoglomus turgidum (strain DSM 6724 / Z-1310).